The chain runs to 98 residues: Large ribosomal subunit protein eL21 (98 aa).

A disordered region spans residues 1 to 23; that stretch reads MVDRKGKGFRRKTRDKLSKHPRQ. The span at 7–23 shows a compositional bias: basic residues; sequence KGFRRKTRDKLSKHPRQ.

It belongs to the eukaryotic ribosomal protein eL21 family.

The protein is Large ribosomal subunit protein eL21 of Nanoarchaeum equitans (strain Kin4-M).